The sequence spans 104 residues: Large ribosomal subunit protein uL24 (104 aa).

It belongs to the universal ribosomal protein uL24 family. Part of the 50S ribosomal subunit.

Its function is as follows. One of two assembly initiator proteins, it binds directly to the 5'-end of the 23S rRNA, where it nucleates assembly of the 50S subunit. One of the proteins that surrounds the polypeptide exit tunnel on the outside of the subunit. This chain is Large ribosomal subunit protein uL24, found in Pectobacterium carotovorum subsp. carotovorum (strain PC1).